Consider the following 450-residue polypeptide: FAD-linked oxidoreductase penO (450 aa).

The FAD-binding PCMH-type domain occupies P32–A203.

This sequence belongs to the oxygen-dependent FAD-linked oxidoreductase family. The cofactor is FAD.

It participates in secondary metabolite biosynthesis. In terms of biological role, FAD-linked oxidoreductase; part of the gene cluster that mediates the biosynthesis of the indole diterpenes penitrems. The geranylgeranyl diphosphate (GGPP) synthase penG catalyzes the first step in penitrem biosynthesis via conversion of farnesyl pyrophosphate and isopentyl pyrophosphate into geranylgeranyl pyrophosphate (GGPP). Condensation of indole-3-glycerol phosphate with GGPP by the prenyl transferase penC then forms 3-geranylgeranylindole (3-GGI). Epoxidation by the FAD-dependent monooxygenase penM leads to a epoxidized-GGI that is substrate of the terpene cyclase penB for cyclization to yield paspaline. Paspaline is subsequently converted to 13-desoxypaxilline by the cytochrome P450 monooxygenase penP, the latter being then converted to paxilline by the cytochrome P450 monooxygenase penQ. Paxilline is converted to beta-paxitriol via C-10 ketoreduction by the short-chain dehydrogenase PC-15 which can be monoprenylated at the C-20 by the indole diterpene prenyltransferase penD. A two-step elimination (acetylation and elimination) process performed by the O-acetyltransferase PC-16 and the P.simplicissimum ptmI-ortholog not yet identified in P.crustosum, leads to the production of the prenylated form of penijanthine. The FAD-linked oxidoreductase ptmO then converts the prenylated form of penijanthine into PC-M5 which is in turn transformed into PC-M4 by the aromatic dimethylallyltransferase PC-22. A series of oxidation steps involving 4 cytochrome P450 monooxygenases (PC-21, PC-05, PC-23, PC-20) and a FAD-dependent monooxygenase (PC-14) are required for the transformation of PC-M4 to penitrems A and E. Synthesis of these final products is proposed to proceed via penitrems D and C (PC-21, PC-05, PC-14) and penitrems B and F (PC-21, PC-05, PC-14, PC-23). This Penicillium crustosum (Blue mold fungus) protein is FAD-linked oxidoreductase penO.